A 468-amino-acid chain; its full sequence is Glutathione reductase (468 aa).

2 residues coordinate FAD: serine 17 and glycine 18. Position 17 (serine 17) interacts with glutathione. Glutathione is bound at residue arginine 24. FAD is bound by residues glutamate 38, threonine 45, cysteine 46, and lysine 54. Cysteines 46 and 51 form a disulfide. Tyrosine 103 lines the glutathione pocket. Alanine 119 provides a ligand contact to FAD. NADP(+) contacts are provided by alanine 185, isoleucine 188, glutamate 191, arginine 208, arginine 214, and glycine 276. FAD is bound at residue aspartate 317. Glutamate 323 lines the NADP(+) pocket. Threonine 325 contacts FAD. Residue arginine 333 coordinates glutathione. Valine 358 serves as a coordination point for NADP(+). Residue lysine 410 participates in glutathione binding. FAD is bound at residue histidine 457. Histidine 457 (proton acceptor) is an active-site residue.

This sequence belongs to the class-I pyridine nucleotide-disulfide oxidoreductase family. Homodimer. FAD serves as cofactor.

The protein resides in the cytoplasm. It localises to the mitochondrion. The catalysed reaction is 2 glutathione + NADP(+) = glutathione disulfide + NADPH + H(+). In terms of biological role, catalyzes the reduction of glutathione disulfide (GSSG) to reduced glutathione (GSH). Constitutes the major mechanism to maintain a high GSH:GSSG ratio in the cytosol. The protein is Glutathione reductase (gtr-1) of Neurospora crassa (strain ATCC 24698 / 74-OR23-1A / CBS 708.71 / DSM 1257 / FGSC 987).